Consider the following 1212-residue polypeptide: MGFKDKILFWKDEVQYRTLAVADQVANRFLHSFENVYQGDESVEDADSRPVGLTNETLSHSSDFFVLPEERISTRVKIRRQNILNTTLILGMLIALVIWTAILSTNSYFSSSLASASPLFNKEGRVVRPMRESNLGLHADPQTRKSSKTLYDLLSDFDNAFYDDENMILGSLAFGENTYSRQPYVANGYIGSRIPNIGFGYALDTLNLYADAPGALNNGWPLRNRRFAGSFVSDFYSLQAKLNSTNFPELDEKGYTTVISSIPEWTDLQFTVDLNGTKWFNPQSVLIDDVINYNQNLSMKDGIVSTNMDWLNGMINIKSEVWAHRKIHSLGITRLEISLNLDALPDEFTELPVTVYDIIDLNTSHRTTLYEKGQDEDNKAIYMIVNPDNVPYSNAVVYSTCTIKGTENNFSPYNFTSDDRIARNYMTNLTEENPKVVIYKYTSVVSSEYNNDEPNPNVNLKFASNIANTAKGNYKSLLSNHKRAWYDLYNDAFIEIPSDSLLEMTARSSLFHLLANTRQYNVSTTRGLPVGVGGLSSDSYGGMVFWDADVWMAPALLPFFPNIAMNMNNYRNATHQQAIENAKQYNYPGAVYPWTSGRYANCTSTGPCIDYEYHINVDIALASFSIYMNGAEGADEDYLRFTTWPMVKDAAVFFKAYVKYNETLGEYETYNLTDPDEFANHVNNGAFTNAGIKTLLKWATDIGTHLGEEVDPKWMEIADNIHIPRSDSNITLEYSGMNSSVEIKQADVTLMVYPLGYINDESILNNAIKDLYYYSERQSASGPAMTYPVFVAAAASLLNHGSSSQSYLYKSVLPYLRSPFAQFSEQSDDNFLTNGLTQPAFPFLTANGGFLQSILFGLTGLRYSYEVTPRTKKISRLLKFDPVKLPLLPGGIAIRNFKYMGQVLDIIIDDNNGTIAHKGGDKPIRIKVPNRDILHDRNITSALYSKRDDDLSATDDYYGTYFTLYPNEELVIPLYDTKLNIDGNIAESKQITNLTAGVPGDVGFSALDGNNYTHWQPFDKSDNAKLLIDLGFNSTHVIKKGIILWGQRPAKNISLSVLPHSERIEQLFANITDLLETSSITKGGLPLNQMLGQTQSNVTAEIDDDILALLNWKGDDLDQLIPYLPDMHLLQEKFIPILKDYPIKPNQRYYEEIIDDDIIKLLPSNTTEFTIDYNSIPGGEKRARYVVLTVHGTYDDDDDLKGATIREIVLQE.

Residues 1-82 (MGFKDKILFW…STRVKIRRQN (82 aa)) lie on the Cytoplasmic side of the membrane. The helical transmembrane segment at 83 to 103 (ILNTTLILGMLIALVIWTAIL) threads the bilayer. At 104 to 1212 (STNSYFSSSL…ATIREIVLQE (1109 aa)) the chain is on the periplasmic side. N-linked (GlcNAc...) asparagine glycosylation is found at Asn-243, Asn-275, Asn-296, Asn-362, Asn-414, Asn-428, and Asn-521. 546-547 (WD) lines the substrate pocket. Asn-572, Asn-601, Asn-661, and Asn-671 each carry an N-linked (GlcNAc...) asparagine glycan. The active-site Proton donor is Glu-677. 2 N-linked (GlcNAc...) asparagine glycosylation sites follow: Asn-729 and Asn-738. Position 744 to 745 (744 to 745 (KQ)) interacts with substrate. Asn-912, Asn-938, Asn-993, Asn-1011, Asn-1033, Asn-1052, Asn-1070, Asn-1097, and Asn-1165 each carry an N-linked (GlcNAc...) asparagine glycan.

It belongs to the glycosyl hydrolase 65 family. Homodimer.

Its subcellular location is the secreted. The protein localises to the periplasm. The protein resides in the membrane. It carries out the reaction alpha,alpha-trehalose + H2O = alpha-D-glucose + beta-D-glucose. Its function is as follows. Periplasmic/secreted acid trehalase that catalyzes hydrolysis of the disaccharide trehalose and required for growth on trehalose as carbon source. Growth on trehalose is not restricted to respiration. In Candida glabrata (Yeast), this protein is Periplasmic/secreted acid trehalase ATH1.